Reading from the N-terminus, the 258-residue chain is Peptidase inhibitor 15 (258 aa).

The N-terminal stretch at 1–21 (MTIIAAISCVFLFSILCETSA) is a signal peptide. A propeptide spanning residues 22–60 (LVLPNSTDLLLSNNNFTDIETALAAHLDSAKIPKARRKR) is cleaved from the precursor. 3 N-linked (GlcNAc...) asparagine glycosylation sites follow: Asn-26, Asn-36, and Asn-124. The region spanning 71–211 (LDYHNQVRGK…RRAVYLVCNY (141 aa)) is the SCP domain.

Belongs to the CRISP family.

It localises to the secreted. Serine protease inhibitor which displays weak inhibitory activity against trypsin. May play a role in facial patterning during embryonic development. This chain is Peptidase inhibitor 15 (PI15), found in Gallus gallus (Chicken).